We begin with the raw amino-acid sequence, 296 residues long: Prostate androgen-regulated mucin-like protein 1 homolog (296 aa).

Residues 1-20 (MVCKVLIALCIFTAGLRVQG) form the signal peptide. At 21 to 244 (SPTVPLPVSL…EVENALSSGS (224 aa)) the chain is on the extracellular side. N-linked (GlcNAc...) asparagine glycosylation is found at Asn61 and Asn95. Residues 72-220 (LTSQLPTDHR…SPQDTEPGKV (149 aa)) form a disordered region. Residues 78–95 (TDHREEAVTSPPLKRDVN) show a composition bias toward basic and acidic residues. Polar residues predominate over residues 96–110 (STDSSPAGFPSTSSD). Residues 139-167 (LLSSQAPTSATTSPATSLSESLSASVTSS) are compositionally biased toward low complexity. The span at 168-177 (HNSTVANIQP) shows a compositional bias: polar residues. Asn169 carries an N-linked (GlcNAc...) asparagine glycan. The span at 206-217 (VPKEKSPQDTEP) shows a compositional bias: basic and acidic residues. The helical transmembrane segment at 245–265 (IAAITVTVIAVVLLVFGGAAY) threads the bilayer. Residues 266-296 (LKIRHSSYGRLLDDHDYGSWGNYNNPLYDDS) are Cytoplasmic-facing. Residue Ser284 is modified to Phosphoserine.

The protein belongs to the PARM family. In terms of processing, highly N-glycosylated and O-glycosylated.

The protein localises to the cell membrane. It localises to the golgi apparatus membrane. The protein resides in the endosome membrane. Its function is as follows. May regulate TLP1 expression and telomerase activity, thus enabling certain prostatic cells to resist apoptosis. This chain is Prostate androgen-regulated mucin-like protein 1 homolog (Parm1), found in Mus musculus (Mouse).